The sequence spans 49 residues: Large ribosomal subunit protein bL33A (49 aa).

The protein belongs to the bacterial ribosomal protein bL33 family.

This Lactobacillus delbrueckii subsp. bulgaricus (strain ATCC 11842 / DSM 20081 / BCRC 10696 / JCM 1002 / NBRC 13953 / NCIMB 11778 / NCTC 12712 / WDCM 00102 / Lb 14) protein is Large ribosomal subunit protein bL33A.